The following is a 418-amino-acid chain: Tyrosine--tRNA ligase 1 (418 aa).

Position 34 (Y34) interacts with L-tyrosine. Positions 39-48 match the 'HIGH' region motif; it reads PTADSLHIGH. L-tyrosine contacts are provided by Y169 and Q173. A 'KMSKS' region motif is present at residues 230-234; it reads KFGKT. An ATP-binding site is contributed by K233. Positions 352–418 constitute an S4 RNA-binding domain; the sequence is TVLIDLLVES…GKKKYFLIRY (67 aa).

It belongs to the class-I aminoacyl-tRNA synthetase family. TyrS type 1 subfamily. As to quaternary structure, homodimer.

It localises to the cytoplasm. It carries out the reaction tRNA(Tyr) + L-tyrosine + ATP = L-tyrosyl-tRNA(Tyr) + AMP + diphosphate + H(+). In terms of biological role, catalyzes the attachment of tyrosine to tRNA(Tyr) in a two-step reaction: tyrosine is first activated by ATP to form Tyr-AMP and then transferred to the acceptor end of tRNA(Tyr). In Bacillus cereus (strain ATCC 14579 / DSM 31 / CCUG 7414 / JCM 2152 / NBRC 15305 / NCIMB 9373 / NCTC 2599 / NRRL B-3711), this protein is Tyrosine--tRNA ligase 1.